The primary structure comprises 189 residues: Protein GrpE (189 aa).

The tract at residues 1-24 is disordered; it reads MADEQNLDTQNPEAQAAENAAPSD. The span at 10–24 shows a compositional bias: low complexity; that stretch reads QNPEAQAAENAAPSD.

It belongs to the GrpE family. In terms of assembly, homodimer.

Its subcellular location is the cytoplasm. Functionally, participates actively in the response to hyperosmotic and heat shock by preventing the aggregation of stress-denatured proteins, in association with DnaK and GrpE. It is the nucleotide exchange factor for DnaK and may function as a thermosensor. Unfolded proteins bind initially to DnaJ; upon interaction with the DnaJ-bound protein, DnaK hydrolyzes its bound ATP, resulting in the formation of a stable complex. GrpE releases ADP from DnaK; ATP binding to DnaK triggers the release of the substrate protein, thus completing the reaction cycle. Several rounds of ATP-dependent interactions between DnaJ, DnaK and GrpE are required for fully efficient folding. The sequence is that of Protein GrpE from Ectopseudomonas mendocina (strain ymp) (Pseudomonas mendocina).